Here is a 246-residue protein sequence, read N- to C-terminus: Ubiquitin-conjugating enzyme E2 6 (246 aa).

Over 1–224 the chain is Cytoplasmic; sequence MATKQAQKRL…LEKQHNDKPN (224 aa). One can recognise a UBC core domain in the interval 5–154; the sequence is QAQKRLTKEY…FNSTRFKLVF (150 aa). C87 acts as the Glycyl thioester intermediate in catalysis. A helical transmembrane segment spans residues 225 to 245; sequence GSSSMFYIGVALFLFLVGLFM.

Belongs to the ubiquitin-conjugating enzyme family.

It is found in the endoplasmic reticulum membrane. It carries out the reaction S-ubiquitinyl-[E1 ubiquitin-activating enzyme]-L-cysteine + [E2 ubiquitin-conjugating enzyme]-L-cysteine = [E1 ubiquitin-activating enzyme]-L-cysteine + S-ubiquitinyl-[E2 ubiquitin-conjugating enzyme]-L-cysteine.. The protein operates within protein modification; protein ubiquitination. In terms of biological role, catalyzes the covalent attachment of ubiquitin to other proteins. Functions in degradation of misfolded or regulated proteins localized in the endoplasmic reticulum (ER) lumen or membrane via the ubiquitin-proteasome system. Cognate E2 conjugating enzyme for the DOA10 ubiquitin ligase complex, which is part of the ERAD-C pathway responsible for the rapid degradation of membrane proteins with misfolded cytoplasmic domains. The polypeptide is Ubiquitin-conjugating enzyme E2 6 (UBC6) (Candida glabrata (strain ATCC 2001 / BCRC 20586 / JCM 3761 / NBRC 0622 / NRRL Y-65 / CBS 138) (Yeast)).